Consider the following 465-residue polypeptide: Glutamate--tRNA ligase (465 aa).

Residues 11–21 (PSPTGFIHLGN) carry the 'HIGH' region motif. The segment covering 120–131 (KPRYDGTWRPEP) has biased composition (basic and acidic residues). Positions 120 to 139 (KPRYDGTWRPEPGKVLPTPP) are disordered. Positions 243–247 (KMSKR) match the 'KMSKS' region motif. Lys246 is an ATP binding site.

The protein belongs to the class-I aminoacyl-tRNA synthetase family. Glutamate--tRNA ligase type 1 subfamily. In terms of assembly, monomer.

It localises to the cytoplasm. The catalysed reaction is tRNA(Glu) + L-glutamate + ATP = L-glutamyl-tRNA(Glu) + AMP + diphosphate. Its function is as follows. Catalyzes the attachment of glutamate to tRNA(Glu) in a two-step reaction: glutamate is first activated by ATP to form Glu-AMP and then transferred to the acceptor end of tRNA(Glu). This Ralstonia nicotianae (strain ATCC BAA-1114 / GMI1000) (Ralstonia solanacearum) protein is Glutamate--tRNA ligase.